Reading from the N-terminus, the 280-residue chain is Golgi to ER traffic protein 2 (280 aa).

The Cytoplasmic portion of the chain corresponds to 1 to 149 (MPSDREKQRI…IAYNLYQQRK (149 aa)). The disordered stretch occupies residues 15–59 (RQAKMAKGGASDRLNKILSQGSSVKTSAVSVLDQPQPADHDPEGM). The span at 31-43 (ILSQGSSVKTSAV) shows a compositional bias: polar residues. Residues 150–170 (VRHRFLVVRMVSILANFVYHF) traverse the membrane as a helical segment. Residues 171–197 (LTISDFSFSPSANPFIRSIPPTSSVSS) are Lumenal-facing. Residues 198–217 (FFQIFVAIEAVLVAAYIAAS) traverse the membrane as a helical segment. The Cytoplasmic portion of the chain corresponds to 218 to 257 (RNVPSNNNGLLVKGISMAAMFVPKLQRFQPLIMKIIGCWD). A helical membrane pass occupies residues 258–278 (TVTFVLNDLGLVVLLFGLISF). The Lumenal portion of the chain corresponds to 279–280 (RR).

The protein belongs to the GET2 family. As to quaternary structure, component of the Golgi to ER traffic (GET) complex, which is composed of GET1, GET2 and GET3. Within the complex, GET1 and GET2 form a heterotetramer which is stabilized by phosphatidylinositol binding and which binds to the GET3 homodimer.

The protein localises to the endoplasmic reticulum membrane. It is found in the golgi apparatus membrane. In terms of biological role, required for the post-translational delivery of tail-anchored (TA) proteins to the endoplasmic reticulum. Together with GET1, acts as a membrane receptor for soluble GET3, which recognizes and selectively binds the transmembrane domain of TA proteins in the cytosol. The GET complex cooperates with the HDEL receptor ERD2 to mediate the ATP-dependent retrieval of resident ER proteins that contain a C-terminal H-D-E-L retention signal from the Golgi to the ER. The polypeptide is Golgi to ER traffic protein 2 (Meyerozyma guilliermondii (strain ATCC 6260 / CBS 566 / DSM 6381 / JCM 1539 / NBRC 10279 / NRRL Y-324) (Yeast)).